Reading from the N-terminus, the 404-residue chain is MVKKVALLTAGGFAPCLSSAIAELIKRYTEVSPETTLIGYRYGYEGLLKGDSLEFSPAVRAHYDRLFSFGGSPIGNSRVKLTNVKDLVARGLVASGDDPLKVAADQLIADGVDVLHTIGGDDTNTTAADLAAYLAQHDYPLTVVGLPKTIDNDIVPIRQSLGAWTAADEGARFAANVIAEHNAAPRELIIHEIMGRNCGYLAAETSRRYVAWLDAQQWLPEAGLDRRGWDIHALYVPEATIDLDAEAERLRTVMDEVGSVNIFISEGAGVPDIVAQMQATGQEVPTDAFGHVQLDKINPGAWFAKQFAERIGAGKTMVQKSGYFSRSAKSNAQDLELIAATATMAVDAALAGTPGVVGQDEEAGDKLSVIDFKRIAGHKPFDITLDWYTQLLARIGQPAPIAAA.

Diphosphate is bound at residue G12. A Mg(2+)-binding site is contributed by D121. Substrate contacts are provided by residues T149–D151, M194–R196, E266, and Y323–R326. The active-site Proton acceptor is the D151.

This sequence belongs to the phosphofructokinase type A (PFKA) family. PPi-dependent PFK group II subfamily. Clade 'P' sub-subfamily. Homodimer. Mg(2+) serves as cofactor.

The protein localises to the cytoplasm. The enzyme catalyses beta-D-fructose 6-phosphate + diphosphate = beta-D-fructose 1,6-bisphosphate + phosphate + H(+). The protein operates within carbohydrate degradation; glycolysis; D-glyceraldehyde 3-phosphate and glycerone phosphate from D-glucose: step 3/4. Non-allosteric. In terms of biological role, catalyzes the phosphorylation of D-fructose 6-phosphate, the first committing step of glycolysis. Uses inorganic phosphate (PPi) as phosphoryl donor instead of ATP like common ATP-dependent phosphofructokinases (ATP-PFKs), which renders the reaction reversible, and can thus function both in glycolysis and gluconeogenesis. Consistently, PPi-PFK can replace the enzymes of both the forward (ATP-PFK) and reverse (fructose-bisphosphatase (FBPase)) reactions. The protein is Pyrophosphate--fructose 6-phosphate 1-phosphotransferase of Propionibacterium freudenreichii subsp. shermanii (strain ATCC 9614 / DSM 4902 / CIP 103027 / NCIMB 8099 / CIRM-BIA1).